Here is a 505-residue protein sequence, read N- to C-terminus: Cytochrome P450 9b2 (505 aa).

Cys-449 contributes to the heme binding site.

The protein belongs to the cytochrome P450 family. Heme is required as a cofactor.

Its subcellular location is the endoplasmic reticulum membrane. The protein localises to the microsome membrane. May be involved in the metabolism of insect hormones and in the breakdown of synthetic insecticides. The sequence is that of Cytochrome P450 9b2 (Cyp9b2) from Drosophila melanogaster (Fruit fly).